We begin with the raw amino-acid sequence, 460 residues long: Antizyme inhibitor 2 (460 aa).

A necessary for polyamine uptake stimulation region spans residues 117-140; it reads QIAQIKYAAKHGIQLLSFDNEMEL.

This sequence belongs to the Orn/Lys/Arg decarboxylase class-II family. ODC antizyme inhibitor subfamily. Monomer. Interacts with OAZ1, OAZ2 and OAZ3; this interaction disrupts the interaction between the antizyme and ODC1. Does not form a heterodimer with ODC1. Ubiquitinated, leading to its proteasomal degradation; a process that is reduced in presence of antizymes. May also be degraded through the lysosomal degradative pathway in a proteasomal-independent manner. In terms of tissue distribution, expressed in the neocortex, thalamus, hippocampus, cerebellum, medulla oblongata, gray and white matter. Expressed in neurons, oligodendrocytes, basket, Purkinje and pyramidal cells. Expressed in spermatocytes and Leydig cells of the testis. Expressed in luteal theca cells lining corpus luteum cysts and in hilus cells of the ovary. Expressed in primary and neoplastic mast cells (MC) (at protein level). Highly expressed in brain. Also expressed in testis.

It localises to the nucleus. It is found in the cytoplasm. The protein resides in the perinuclear region. Its subcellular location is the membrane. The protein localises to the cytoplasmic vesicle. It localises to the endoplasmic reticulum-Golgi intermediate compartment. It is found in the golgi apparatus. The protein resides in the cis-Golgi network. Its subcellular location is the trans-Golgi network. The protein localises to the cytoplasmic granule. It localises to the cell projection. It is found in the axon. The protein resides in the dendrite. Its subcellular location is the perikaryon. Antizyme inhibitor (AZI) protein that positively regulates ornithine decarboxylase (ODC) activity and polyamine uptake. AZI is an enzymatically inactive ODC homolog that counteracts the negative effect of ODC antizymes (AZs) OAZ1, OAZ2 and OAZ3 on ODC activity by competing with ODC for antizyme-binding. Inhibits antizyme-dependent ODC degradation and releases ODC monomers from their inactive complex with antizymes, leading to formation of the catalytically active ODC homodimer and restoring polyamine production. Participates in the morphological integrity of the trans-Golgi network (TGN) and functions as a regulator of intracellular secretory vesicle trafficking. This Homo sapiens (Human) protein is Antizyme inhibitor 2 (AZIN2).